The chain runs to 147 residues: Protein MioC (147 aa).

In terms of domain architecture, Flavodoxin-like spans 4–143 (ITLISGSTLG…PAEEWLGSWV (140 aa)).

The protein belongs to the flavodoxin family. MioC subfamily. Homodimer. The cofactor is FMN.

In terms of biological role, probable electron transporter required for biotin synthase activity. This chain is Protein MioC (mioC), found in Escherichia coli (strain K12).